Consider the following 406-residue polypeptide: NIPA-like protein 3 (406 aa).

4 helical membrane passes run 33 to 53 (NLIG…ALNL), 76 to 96 (WWLG…SYAF), 101 to 121 (LIVP…IIFI), and 135 to 155 (VLSF…VTFA). The N-linked (GlcNAc...) asparagine glycan is linked to asparagine 166. 5 helical membrane-spanning segments follow: residues 171-191 (LVSW…CLLL), 202-222 (IVVI…TVKA), 240-260 (PIFY…AAFL), 271-291 (LIAS…GAIF), and 300-320 (VLHI…VFLI). Serine 372 bears the Phosphoserine mark.

It belongs to the NIPA family.

The protein localises to the membrane. This is NIPA-like protein 3 (NIPAL3) from Homo sapiens (Human).